We begin with the raw amino-acid sequence, 129 residues long: NADPH-dependent 7-cyano-7-deazaguanine reductase (129 aa).

Cys34 serves as the catalytic Thioimide intermediate. The active-site Proton donor is the Asp41. Substrate-binding positions include 56–58 (VEL) and 75–76 (HE).

It belongs to the GTP cyclohydrolase I family. QueF type 1 subfamily.

Its subcellular location is the cytoplasm. The catalysed reaction is 7-aminomethyl-7-carbaguanine + 2 NADP(+) = 7-cyano-7-deazaguanine + 2 NADPH + 3 H(+). It functions in the pathway tRNA modification; tRNA-queuosine biosynthesis. In terms of biological role, catalyzes the NADPH-dependent reduction of 7-cyano-7-deazaguanine (preQ0) to 7-aminomethyl-7-deazaguanine (preQ1). The chain is NADPH-dependent 7-cyano-7-deazaguanine reductase from Alkalilimnicola ehrlichii (strain ATCC BAA-1101 / DSM 17681 / MLHE-1).